A 419-amino-acid polypeptide reads, in one-letter code: 3-isopropylmalate dehydratase large subunit (419 aa).

Residues Cys-301, Cys-361, and Cys-364 each contribute to the [4Fe-4S] cluster site.

Belongs to the aconitase/IPM isomerase family. LeuC type 2 subfamily. Heterodimer of LeuC and LeuD. It depends on [4Fe-4S] cluster as a cofactor.

It carries out the reaction (2R,3S)-3-isopropylmalate = (2S)-2-isopropylmalate. The protein operates within amino-acid biosynthesis; L-leucine biosynthesis; L-leucine from 3-methyl-2-oxobutanoate: step 2/4. Functionally, catalyzes the isomerization between 2-isopropylmalate and 3-isopropylmalate, via the formation of 2-isopropylmaleate. The protein is 3-isopropylmalate dehydratase large subunit of Campylobacter hominis (strain ATCC BAA-381 / DSM 21671 / CCUG 45161 / LMG 19568 / NCTC 13146 / CH001A).